We begin with the raw amino-acid sequence, 1069 residues long: Kinesin-like protein vab-8 (1069 aa).

Residues 15–325 (PLRTIPKLRL…ACKIARTRVK (311 aa)) form the Kinesin motor domain. 3 disordered regions span residues 328–374 (MGHG…LESG), 391–436 (SRTT…KSSP), and 572–598 (EQEE…RILS). Interaction with unc-51 regions lie at residues 331 to 517 (GRKP…KSKY) and 517 to 719 (YNLD…TVVD). 2 stretches are compositionally biased toward low complexity: residues 339 to 364 (SSGT…GTPR) and 391 to 407 (SRTT…TPTS). The interval 403 to 877 (STPTSIRPLH…SAERDRKTSK (475 aa)) is interaction with unc-73. Residues 719 to 769 (DWSQIERKKEREKDAMEEEKRKEVLRERRAKLKITELEIKRERNMIDKELD) are a coiled coil. A disordered region spans residues 786–960 (SLSPCRGGRT…RQSYSASSGY (175 aa)). Positions 824-847 (GGSLAKLSASGASGSGPPSSPSLG) are enriched in low complexity. A compositionally biased stretch (basic and acidic residues) spans 883 to 897 (SSKERRSSGSKEELQ). Over residues 906 to 928 (TSPKTYGGPGTSSSGRGSSAPGS) the composition is skewed to low complexity. Residues 938–960 (TEKTANGTMPRSKRQSYSASSGY) are compositionally biased toward polar residues. Residues 990–1027 (LVRQADEIRHRQWQLKKELEEAKRAIGQEEDAKMIANS) are a coiled coil.

Belongs to the TRAFAC class myosin-kinesin ATPase superfamily. Kinesin family. KIF26 subfamily. Interacts with unc-51 and unc-73. In terms of processing, phosphorylated by unc-51.

Its subcellular location is the cytoplasm. It localises to the cytoskeleton. Required for posterior migration of cells and axon growth cones during nervous system assembly. In PLM neuron, regulates innexin unc-9 gap junction turnover by suppressing unc-9 transport out of the gap junctions. The protein is Kinesin-like protein vab-8 (vab-8) of Caenorhabditis briggsae.